The primary structure comprises 204 residues: Holliday junction branch migration complex subunit RuvA (204 aa).

Residues Met1–Ser64 form a domain I region. The domain II stretch occupies residues His65–Lys143. Residues Ser144 to Leu155 form a flexible linker region. The interval Asp156–Leu204 is domain III.

The protein belongs to the RuvA family. In terms of assembly, homotetramer. Forms an RuvA(8)-RuvB(12)-Holliday junction (HJ) complex. HJ DNA is sandwiched between 2 RuvA tetramers; dsDNA enters through RuvA and exits via RuvB. An RuvB hexamer assembles on each DNA strand where it exits the tetramer. Each RuvB hexamer is contacted by two RuvA subunits (via domain III) on 2 adjacent RuvB subunits; this complex drives branch migration. In the full resolvosome a probable DNA-RuvA(4)-RuvB(12)-RuvC(2) complex forms which resolves the HJ.

It is found in the cytoplasm. Its function is as follows. The RuvA-RuvB-RuvC complex processes Holliday junction (HJ) DNA during genetic recombination and DNA repair, while the RuvA-RuvB complex plays an important role in the rescue of blocked DNA replication forks via replication fork reversal (RFR). RuvA specifically binds to HJ cruciform DNA, conferring on it an open structure. The RuvB hexamer acts as an ATP-dependent pump, pulling dsDNA into and through the RuvAB complex. HJ branch migration allows RuvC to scan DNA until it finds its consensus sequence, where it cleaves and resolves the cruciform DNA. In Histophilus somni (strain 2336) (Haemophilus somnus), this protein is Holliday junction branch migration complex subunit RuvA.